A 585-amino-acid polypeptide reads, in one-letter code: MGKIVRVTGPLVVADEMRGSRMYEVVRVGELGLIGEIIRLEGDKAVIQVYEETAGIKPGEPVMGTGASLSVELGPGLLTSIYDGIQRPLEILRSQSGDFIGRGLTAPALSRDKKWHFTPKVKVGDKVVGGDIIGVVPETSIIEHKIMIPPEIEGEIIEIVGEGDYTIEEVIAKVKAPNGEIKEVRMYQRWPVRMKRPYKQKLPPEVPLVTGQRTIDTFFPQAKGGTAAIPGPFGSGKTVTQHQLAKWSDAEVVVYIGCGERGNEMTDVLEEFPKLKDPRTGKPLMERTVLIANTSNMPVAAREASIYTGITIAEYFRDMGYNVALMADSTSRWAEALREISGRLEEMPGEEGYPAYLASKVAEFYERAGRVRTLGSDDRIGSVSVIGAVSPPGGDLSDPVVQNTLRVVKVFWALDADLARRRHFPAINWLTSYSLYVDSIKDWWQNNVDPEWKAMRDEAMALLQKESELEEIVRIVGPDALPEREKAILLVARMLREDYLQQDAFHEVDTYCLPKKQVTMMRVILNFYRHTMRAIDAGIPVEEIAKLPVREEIGRMKYNPNIEEIAVLMEKTKEQFEELFKKYGE.

231-238 serves as a coordination point for ATP; the sequence is GPFGSGKT.

It belongs to the ATPase alpha/beta chains family. In terms of assembly, has multiple subunits with at least A(3), B(3), C, D, E, F, H, I and proteolipid K(x).

Its subcellular location is the cell membrane. It carries out the reaction ATP + H2O + 4 H(+)(in) = ADP + phosphate + 5 H(+)(out). Functionally, component of the A-type ATP synthase that produces ATP from ADP in the presence of a proton gradient across the membrane. The A chain is the catalytic subunit. The polypeptide is A-type ATP synthase subunit A (Thermococcus sibiricus (strain DSM 12597 / MM 739)).